We begin with the raw amino-acid sequence, 304 residues long: N-acetyl-D-glucosamine kinase (304 aa).

ATP-binding positions include 4–11 (GFDMGGTK) and 133–140 (GVGGGLIV). Zn(2+)-binding residues include His-157, Cys-177, Cys-179, and Cys-184.

Belongs to the ROK (NagC/XylR) family. NagK subfamily.

The catalysed reaction is N-acetyl-D-glucosamine + ATP = N-acetyl-D-glucosamine 6-phosphate + ADP + H(+). Its pathway is cell wall biogenesis; peptidoglycan recycling. Its function is as follows. Catalyzes the phosphorylation of N-acetyl-D-glucosamine (GlcNAc) derived from cell-wall degradation, yielding GlcNAc-6-P. This chain is N-acetyl-D-glucosamine kinase, found in Yersinia pseudotuberculosis serotype IB (strain PB1/+).